The sequence spans 55 residues: uncharacterized protein (55 aa).

2 helical membrane passes run 2-19 and 24-46; these read VIGL…SFIA and LLSI…FRYF.

It is found in the cell membrane. This is an uncharacterized protein from Alkalihalophilus pseudofirmus (strain ATCC BAA-2126 / JCM 17055 / OF4) (Bacillus pseudofirmus).